A 63-amino-acid polypeptide reads, in one-letter code: Potassium channel toxin alpha-KTx 21.1 (63 aa).

The signal sequence occupies residues 1-27; it reads MQFSGVVLILISMTLVNFVFFETKVEA. 3 disulfides stabilise this stretch: Cys33–Cys53, Cys38–Cys58, and Cys42–Cys60.

This sequence belongs to the short scorpion toxin superfamily. Potassium channel inhibitor family. Alpha-KTx 21 subfamily. Expressed by the venom gland.

The protein localises to the secreted. In terms of biological role, reversibly and voltage-independently blocks voltage-gated potassium channels rKv1.2/KCNA2 (73%) (IC(50)=196 nM), hKv1.3/KCNA3 (50%) (IC(50)=508 nM), Shaker IR (30%), rKv1.6/KCNA6 (22%) (at 0.5 uM). Interaction of Ts15 with Kv1.3/KCNA3 is stronger than its interaction with Kv1.2/KCNA2. The chain is Potassium channel toxin alpha-KTx 21.1 from Tityus serrulatus (Brazilian scorpion).